The following is a 413-amino-acid chain: Elongation factor 1-alpha (413 aa).

Residues Lys5 to Val211 form the tr-type G domain. Residues Gly14–Ser21 form a G1 region. A GTP-binding site is contributed by Gly14–Ser21. A Mg(2+)-binding site is contributed by Ser21. Residues Gly60–Asp64 form a G2 region. Residues Asp81–Gly84 form a G3 region. Residues Asp81–His85 and Asn136–Asp139 contribute to the GTP site. The segment at Asn136 to Asp139 is G4. Residues Ser175–Phe177 form a G5 region.

The protein belongs to the TRAFAC class translation factor GTPase superfamily. Classic translation factor GTPase family. EF-Tu/EF-1A subfamily.

The protein resides in the cytoplasm. It carries out the reaction GTP + H2O = GDP + phosphate + H(+). Its function is as follows. GTP hydrolase that promotes the GTP-dependent binding of aminoacyl-tRNA to the A-site of ribosomes during protein biosynthesis. The polypeptide is Elongation factor 1-alpha (Methanosphaera stadtmanae (strain ATCC 43021 / DSM 3091 / JCM 11832 / MCB-3)).